Consider the following 104-residue polypeptide: ATP-dependent Clp protease adapter protein ClpS (104 aa).

Belongs to the ClpS family. Binds to the N-terminal domain of the chaperone ClpA.

Involved in the modulation of the specificity of the ClpAP-mediated ATP-dependent protein degradation. This is ATP-dependent Clp protease adapter protein ClpS from Nitratidesulfovibrio vulgaris (strain ATCC 29579 / DSM 644 / CCUG 34227 / NCIMB 8303 / VKM B-1760 / Hildenborough) (Desulfovibrio vulgaris).